Here is a 433-residue protein sequence, read N- to C-terminus: Ribosomal protein uS12 methylthiotransferase RimO (433 aa).

Positions 9–124 constitute an MTTase N-terminal domain; the sequence is NKINVITLGC…LLKALGADYR (116 aa). [4Fe-4S] cluster is bound by residues Cys-18, Cys-53, Cys-87, Cys-148, Cys-152, and Cys-155. The region spanning 134–364 is the Radical SAM core domain; that stretch reads TTPKNYAYLK…MDLQSQISWD (231 aa). The TRAM domain occupies 367–433; sequence QEKLGQTFRC…TEFDLYGEPA (67 aa).

Belongs to the methylthiotransferase family. RimO subfamily. Requires [4Fe-4S] cluster as cofactor.

It localises to the cytoplasm. It catalyses the reaction L-aspartate(89)-[ribosomal protein uS12]-hydrogen + (sulfur carrier)-SH + AH2 + 2 S-adenosyl-L-methionine = 3-methylsulfanyl-L-aspartate(89)-[ribosomal protein uS12]-hydrogen + (sulfur carrier)-H + 5'-deoxyadenosine + L-methionine + A + S-adenosyl-L-homocysteine + 2 H(+). Catalyzes the methylthiolation of an aspartic acid residue of ribosomal protein uS12. The sequence is that of Ribosomal protein uS12 methylthiotransferase RimO from Flavobacterium psychrophilum (strain ATCC 49511 / DSM 21280 / CIP 103535 / JIP02/86).